Consider the following 612-residue polypeptide: Alpha-1,3-galactosidase B (612 aa).

Positions Met-1–Ala-19 are cleaved as a signal peptide. Cys-20 carries the N-palmitoyl cysteine lipid modification. Cys-20 carries the S-diacylglycerol cysteine lipid modification. PbH1 repeat units follow at residues Thr-431–Thr-453, Pro-454–Gly-476, and Cys-487–Ala-536.

The protein belongs to the glycosyl hydrolase 110 family. B subfamily.

The protein resides in the cell membrane. The catalysed reaction is Hydrolysis of terminal, non-reducing branched (1-&gt;3)-alpha-D-galactosidic residues, producing free D-galactose.. It carries out the reaction Hydrolysis of terminal, non-reducing linear (1-&gt;3)-alpha-D-galactosidic residues, producing free D-galactose.. It catalyses the reaction Hydrolysis of terminal, non-reducing alpha-D-galactose residues in alpha-D-galactosides, including galactose oligosaccharides, galactomannans and galactolipids.. Alpha-galactosidase. Removes both branched alpha-1,3-linked galactose residues of blood group B antigens and linear alpha-1,3-linked galactose structures. This is Alpha-1,3-galactosidase B (glaB) from Parabacteroides distasonis (strain ATCC 8503 / DSM 20701 / CIP 104284 / JCM 5825 / NCTC 11152).